The chain runs to 764 residues: 5-methyltetrahydropteroyltriglutamate--homocysteine methyltransferase (764 aa).

5-methyltetrahydropteroyltri-L-glutamate contacts are provided by residues 16–19 (RELK) and K115. Residues 435–437 (IGS) and E488 each bind L-homocysteine. L-methionine-binding positions include 435–437 (IGS) and E488. 5-methyltetrahydropteroyltri-L-glutamate is bound by residues 519-520 (RC) and W565. D603 provides a ligand contact to L-homocysteine. D603 serves as a coordination point for L-methionine. E609 contacts 5-methyltetrahydropteroyltri-L-glutamate. H645, C647, and E669 together coordinate Zn(2+). The active-site Proton donor is the H698. C730 is a Zn(2+) binding site.

It belongs to the vitamin-B12 independent methionine synthase family. The cofactor is Zn(2+).

The enzyme catalyses 5-methyltetrahydropteroyltri-L-glutamate + L-homocysteine = tetrahydropteroyltri-L-glutamate + L-methionine. Its pathway is amino-acid biosynthesis; L-methionine biosynthesis via de novo pathway; L-methionine from L-homocysteine (MetE route): step 1/1. Catalyzes the transfer of a methyl group from 5-methyltetrahydrofolate to homocysteine resulting in methionine formation. This chain is 5-methyltetrahydropteroyltriglutamate--homocysteine methyltransferase, found in Burkholderia pseudomallei (strain K96243).